A 232-amino-acid chain; its full sequence is Enolase-phosphatase E1 (232 aa).

Belongs to the HAD-like hydrolase superfamily. MasA/MtnC family. As to quaternary structure, monomer. Mg(2+) serves as cofactor.

The enzyme catalyses 5-methylsulfanyl-2,3-dioxopentyl phosphate + H2O = 1,2-dihydroxy-5-(methylsulfanyl)pent-1-en-3-one + phosphate. The protein operates within amino-acid biosynthesis; L-methionine biosynthesis via salvage pathway; L-methionine from S-methyl-5-thio-alpha-D-ribose 1-phosphate: step 3/6. It participates in amino-acid biosynthesis; L-methionine biosynthesis via salvage pathway; L-methionine from S-methyl-5-thio-alpha-D-ribose 1-phosphate: step 4/6. Functionally, bifunctional enzyme that catalyzes the enolization of 2,3-diketo-5-methylthiopentyl-1-phosphate (DK-MTP-1-P) into the intermediate 2-hydroxy-3-keto-5-methylthiopentenyl-1-phosphate (HK-MTPenyl-1-P), which is then dephosphorylated to form the acireductone 1,2-dihydroxy-3-keto-5-methylthiopentene (DHK-MTPene). The sequence is that of Enolase-phosphatase E1 from Sorangium cellulosum (strain So ce56) (Polyangium cellulosum (strain So ce56)).